A 305-amino-acid chain; its full sequence is UDP-3-O-acyl-N-acetylglucosamine deacetylase (305 aa).

Residues His-79, His-238, and Asp-242 each contribute to the Zn(2+) site. His-265 serves as the catalytic Proton donor.

It belongs to the LpxC family. Requires Zn(2+) as cofactor.

It catalyses the reaction a UDP-3-O-[(3R)-3-hydroxyacyl]-N-acetyl-alpha-D-glucosamine + H2O = a UDP-3-O-[(3R)-3-hydroxyacyl]-alpha-D-glucosamine + acetate. It participates in glycolipid biosynthesis; lipid IV(A) biosynthesis; lipid IV(A) from (3R)-3-hydroxytetradecanoyl-[acyl-carrier-protein] and UDP-N-acetyl-alpha-D-glucosamine: step 2/6. Functionally, catalyzes the hydrolysis of UDP-3-O-myristoyl-N-acetylglucosamine to form UDP-3-O-myristoylglucosamine and acetate, the committed step in lipid A biosynthesis. This is UDP-3-O-acyl-N-acetylglucosamine deacetylase from Citrobacter koseri (strain ATCC BAA-895 / CDC 4225-83 / SGSC4696).